A 287-amino-acid polypeptide reads, in one-letter code: uncharacterized protein (287 aa).

Disordered regions lie at residues 109 to 175, 203 to 223, and 257 to 287; these read QEES…SSQD, IPPPTRLISEGPEEPKESQPV, and KESEKSSNETQELSSHSLEEASVHDRISSEE. Positions 110-136 are enriched in low complexity; sequence EESSSSLEEGIIEDPVVATPSPASAAP. Basic and acidic residues predominate over residues 143-152; the sequence is RKEFKNEKWK. The span at 153 to 162 shows a compositional bias: basic residues; the sequence is EKKKQGRRRN. Over residues 273–287 the composition is skewed to basic and acidic residues; it reads SLEEASVHDRISSEE.

The protein belongs to the chlamydial CPn_0623/CT_504/TC_0791 family.

This is an uncharacterized protein from Chlamydia muridarum (strain MoPn / Nigg).